The following is a 67-amino-acid chain: Alpha-conotoxin-like Qc1.1b (67 aa).

A signal peptide spans 1–21; that stretch reads MGMRMMFTMFLLVVLAITVVS. Positions 22–46 are excised as a propeptide; sequence FTSDHASDGRNTAANDKASKLMALR. 2 cysteine pairs are disulfide-bonded: Cys49/Cys55 and Cys50/Cys63. Residues 51 to 53 are lacks the Ser-Xaa-Pro motif that is crucial for potent interaction with nAChR; it reads DNP.

The protein belongs to the conotoxin A superfamily. As to expression, expressed by the venom duct.

It localises to the secreted. In terms of biological role, alpha-conotoxins act on postsynaptic membranes, they bind to the nicotinic acetylcholine receptors (nAChR) and thus inhibit them. Has possibly a distinct nAChR binding mode from other alpha-conotoxins, due to a different three residue motif (lacks the Ser-Xaa-Pro motif). In Conus quercinus (Oak cone), this protein is Alpha-conotoxin-like Qc1.1b.